A 207-amino-acid polypeptide reads, in one-letter code: MSRYRGPRLRIIRRLRNLPGLTNKLVESKKNKVSGSDQSIQKKVSQYCIRLEAKQRLRFNYGLTERQLLNYVRIARCAKGSTGQILLQLLEMRLDNILFRLGVVPTIPSARQLINHRHILVNNRIVDVPSFHCKPKDIITIGAPKTYQSILSKRIESFAKDQVPEHLTLSLSEPKKPKGLVNYLINRESIGLTINELLVVEYYSRKA.

In terms of domain architecture, S4 RNA-binding spans 92-155 (MRLDNILFRL…TYQSILSKRI (64 aa)).

It belongs to the universal ribosomal protein uS4 family. As to quaternary structure, part of the 30S ribosomal subunit. Contacts protein S5. The interaction surface between S4 and S5 is involved in control of translational fidelity.

The protein resides in the plastid. It is found in the chloroplast. Its function is as follows. One of the primary rRNA binding proteins, it binds directly to 16S rRNA where it nucleates assembly of the body of the 30S subunit. In terms of biological role, with S5 and S12 plays an important role in translational accuracy. This Equisetum scirpoides (Dwarf-scouring rush) protein is Small ribosomal subunit protein uS4c (rps4).